Here is a 381-residue protein sequence, read N- to C-terminus: Cytochrome b (381 aa).

Transmembrane regions (helical) follow at residues 33-53 (FGSLLGICLVIQILTGLFLAM), 77-98 (WLIRNLHANGASMFFMCLFLHV), 113-133 (WNIGVILLLTVMATAFVGYVL), and 178-198 (FFAFHFILPFIIMALVIVHLL). Heme b-binding residues include His-83 and His-97. Residues His-182 and His-196 each contribute to the heme b site. His-201 contributes to the a ubiquinone binding site. The next 4 helical transmembrane spans lie at 226-246 (IKDALGLMFLLLVLLTLALFS), 288-308 (LGGVLALLASILILLIIPLLH), 320-340 (VSQTLFWILTANLITLTWIGG), and 347-367 (FIIIGQSASILLSMLILVLMP).

Belongs to the cytochrome b family. The cytochrome bc1 complex contains 11 subunits: 3 respiratory subunits (MT-CYB, CYC1 and UQCRFS1), 2 core proteins (UQCRC1 and UQCRC2) and 6 low-molecular weight proteins (UQCRH/QCR6, UQCRB/QCR7, UQCRQ/QCR8, UQCR10/QCR9, UQCR11/QCR10 and a cleavage product of UQCRFS1). This cytochrome bc1 complex then forms a dimer. Heme b is required as a cofactor.

It localises to the mitochondrion inner membrane. Component of the ubiquinol-cytochrome c reductase complex (complex III or cytochrome b-c1 complex) that is part of the mitochondrial respiratory chain. The b-c1 complex mediates electron transfer from ubiquinol to cytochrome c. Contributes to the generation of a proton gradient across the mitochondrial membrane that is then used for ATP synthesis. The chain is Cytochrome b (MT-CYB) from Ningaui yvonnae (Southern ningaui).